Consider the following 304-residue polypeptide: Small ribosomal subunit protein uS3 (304 aa).

The KH type-2 domain maps to 17–86 (MDEYFAKQLS…NPQIDAQEVK (70 aa)).

Belongs to the universal ribosomal protein uS3 family. Part of the 30S ribosomal subunit.

In terms of biological role, binds the lower part of the 30S subunit head. The polypeptide is Small ribosomal subunit protein uS3 (Methanococcoides burtonii (strain DSM 6242 / NBRC 107633 / OCM 468 / ACE-M)).